Consider the following 467-residue polypeptide: MSKFPTISEILSGKVAVGEEVAVRGWVRTRRDSKAGLSFLAVYDGSCFDPIQAIINNDLSNYQDEVLRLTAGCSVIVTGVIVESPAEGQAVELQAKSVEVVGWVEDPDTYPMAAKRHSIEYLREVAHLRPRTNLIGAVARVRHCLAQAIHRFFHEQGFYWVATPLITASDTEGAGEMFRVSTLDLENLPRGEDGKVDFSQDFFGRESFLTVSGQLNGETYACALSKVYTFGPTFRAENSNTTRHLAEFWMVEPEFAFATLADNAKLAEDMLKYVFRAVLEERKDDLKFFEKHIDNTVISRLENFINSDFAQIDYTDAIEVLLKSGKNFEFPVEWGIDLSSEHERFLAEEYFKSPVVVKNYPKDIKAFYMRLNDDGKTVAAMDVLAPGIGEIIGGSQREERLEVLDKRMVEMGLNPEDYWWYRDLRRYGTVPHSGFGLGFERLIVYVTGLQNIREVIPFPRAPRNANF.

It belongs to the class-II aminoacyl-tRNA synthetase family. As to quaternary structure, homodimer.

The protein resides in the cytoplasm. It carries out the reaction tRNA(Asn) + L-asparagine + ATP = L-asparaginyl-tRNA(Asn) + AMP + diphosphate + H(+). The protein is Asparagine--tRNA ligase of Glaesserella parasuis serovar 5 (strain SH0165) (Haemophilus parasuis).